The sequence spans 227 residues: NAD(P)H-quinone oxidoreductase subunit K, chloroplastic (227 aa).

Residues Cys43, Cys44, Cys108, and Cys139 each contribute to the [4Fe-4S] cluster site. Over residues 173–192 (RSFTTNHKFQVGRSSHTGNY) the composition is skewed to polar residues. The interval 173–201 (RSFTTNHKFQVGRSSHTGNYDQGFLSKPP) is disordered.

It belongs to the complex I 20 kDa subunit family. In terms of assembly, NDH is composed of at least 16 different subunits, 5 of which are encoded in the nucleus. The cofactor is [4Fe-4S] cluster.

The protein resides in the plastid. It is found in the chloroplast thylakoid membrane. The catalysed reaction is a plastoquinone + NADH + (n+1) H(+)(in) = a plastoquinol + NAD(+) + n H(+)(out). It catalyses the reaction a plastoquinone + NADPH + (n+1) H(+)(in) = a plastoquinol + NADP(+) + n H(+)(out). NDH shuttles electrons from NAD(P)H:plastoquinone, via FMN and iron-sulfur (Fe-S) centers, to quinones in the photosynthetic chain and possibly in a chloroplast respiratory chain. The immediate electron acceptor for the enzyme in this species is believed to be plastoquinone. Couples the redox reaction to proton translocation, and thus conserves the redox energy in a proton gradient. This chain is NAD(P)H-quinone oxidoreductase subunit K, chloroplastic, found in Trachelium caeruleum (Blue throatwort).